The following is a 363-amino-acid chain: Protein-arginine kinase (363 aa).

The Phosphagen kinase C-terminal domain maps to 24–254 (IVLSSRIRLA…AQLIEQERSA (231 aa)). ATP is bound by residues 27-31 (SSRIR), H92, R125, 176-180 (RASVM), and 207-212 (RGIYGE). The RDXXRA motif of the pArg binding pocket involved in allosteric regulation motif lies at 337–342 (RDIRRA).

The protein belongs to the ATP:guanido phosphotransferase family.

The enzyme catalyses L-arginyl-[protein] + ATP = N(omega)-phospho-L-arginyl-[protein] + ADP + H(+). Appears to be allosterically activated by the binding of pArg-containing polypeptides to the pArg-binding pocket localized in the C-terminal domain of McsB. Catalyzes the specific phosphorylation of arginine residues in a large number of proteins. Is part of the bacterial stress response system. Protein arginine phosphorylation has a physiologically important role and is involved in the regulation of many critical cellular processes, such as protein homeostasis, motility, competence, and stringent and stress responses, by regulating gene expression and protein activity. The sequence is that of Protein-arginine kinase from Bacillus licheniformis (strain ATCC 14580 / DSM 13 / JCM 2505 / CCUG 7422 / NBRC 12200 / NCIMB 9375 / NCTC 10341 / NRRL NRS-1264 / Gibson 46).